The primary structure comprises 600 residues: Adenine deaminase (600 aa).

It belongs to the metallo-dependent hydrolases superfamily. Adenine deaminase family. Requires Mn(2+) as cofactor.

The enzyme catalyses adenine + H2O + H(+) = hypoxanthine + NH4(+). The chain is Adenine deaminase from Bradyrhizobium sp. (strain BTAi1 / ATCC BAA-1182).